Reading from the N-terminus, the 1072-residue chain is Guanylyl cyclase C (1072 aa).

The first 19 residues, methionine 1–methionine 19, serve as a signal peptide directing secretion. At valine 20–methionine 433 the chain is on the extracellular side. Asparagine 32, asparagine 75, asparagine 79, asparagine 179, asparagine 188, asparagine 195, asparagine 284, asparagine 307, asparagine 345, and asparagine 402 each carry an N-linked (GlcNAc...) asparagine glycan. A helical membrane pass occupies residues isoleucine 434–leucine 454. Over arginine 455–phenylalanine 1072 the chain is Cytoplasmic. A Protein kinase domain is found at leucine 489–phenylalanine 748. One can recognise a Guanylate cyclase domain in the interval threonine 823–glutamate 953.

Belongs to the adenylyl cyclase class-4/guanylyl cyclase family. Homotrimer. Interacts via its C-terminal region with NHERF4. Interacts with the lectin chaperone VIP36. Glycosylation at Asn-75 and/or Asn-79 is required for interaction with VIP36 while glycosylation at Asn-345 and Asn-402 modulates ligand-mediated GC-C activation.

Its subcellular location is the cell membrane. The protein localises to the endoplasmic reticulum membrane. It carries out the reaction GTP = 3',5'-cyclic GMP + diphosphate. Functionally, guanylyl cyclase that catalyzes synthesis of cyclic GMP (cGMP) from GTP. This Mus musculus (Mouse) protein is Guanylyl cyclase C (Gucy2c).